The chain runs to 319 residues: tRNA uridine(34) hydroxylase (319 aa).

In terms of domain architecture, Rhodanese spans 127–221 (KQEDTVIIDA…YGKDPEVQGE (95 aa)). The active-site Cysteine persulfide intermediate is the C181.

The protein belongs to the TrhO family.

It catalyses the reaction uridine(34) in tRNA + AH2 + O2 = 5-hydroxyuridine(34) in tRNA + A + H2O. In terms of biological role, catalyzes oxygen-dependent 5-hydroxyuridine (ho5U) modification at position 34 in tRNAs. The polypeptide is tRNA uridine(34) hydroxylase (Bacillus cereus (strain Q1)).